We begin with the raw amino-acid sequence, 208 residues long: Large ribosomal subunit protein bL25 (208 aa).

Belongs to the bacterial ribosomal protein bL25 family. CTC subfamily. As to quaternary structure, part of the 50S ribosomal subunit; part of the 5S rRNA/L5/L18/L25 subcomplex. Contacts the 5S rRNA. Binds to the 5S rRNA independently of L5 and L18.

Its function is as follows. This is one of the proteins that binds to the 5S RNA in the ribosome where it forms part of the central protuberance. The protein is Large ribosomal subunit protein bL25 of Bordetella pertussis (strain Tohama I / ATCC BAA-589 / NCTC 13251).